The following is a 215-amino-acid chain: Peroxiredoxin (215 aa).

Residues 6-161 enclose the Thioredoxin domain; it reads PLIGEEFPRV…ILRAVKALQT (156 aa). The active-site Cysteine sulfenic acid (-SOH) intermediate is the Cys48. Arg124 is a substrate binding site. Residues Cys205 and Cys211 are joined by a disulfide bond.

It belongs to the peroxiredoxin family. Prx6 subfamily. Homodecamer. Pentamer of dimers that assemble into a ring structure.

The protein localises to the cytoplasm. The enzyme catalyses a hydroperoxide + [thioredoxin]-dithiol = an alcohol + [thioredoxin]-disulfide + H2O. In terms of biological role, thiol-specific peroxidase that catalyzes the reduction of hydrogen peroxide and organic hydroperoxides to water and alcohols, respectively. Plays a role in cell protection against oxidative stress by detoxifying peroxides. The protein is Peroxiredoxin of Thermotoga maritima (strain ATCC 43589 / DSM 3109 / JCM 10099 / NBRC 100826 / MSB8).